The sequence spans 206 residues: Ras-related protein Ral-B (206 aa).

Residue 21–29 (GSGGVGKSA) participates in GTP binding. Positions 43–51 (YEPTKADSY) match the Effector region motif. Residues 68 to 72 (DTAGQ), 128 to 131 (NKSD), and 158 to 160 (SAK) contribute to the GTP site. Positions 180–189 (KMSENKDKNG) are enriched in basic and acidic residues. The disordered stretch occupies residues 180–206 (KMSENKDKNGKKSSKNKKSFKERCCLL). C203 is modified (cysteine methyl ester). C203 is lipidated: S-geranylgeranyl cysteine. Positions 204 to 206 (CLL) are cleaved as a propeptide — removed in mature form.

The protein belongs to the small GTPase superfamily. Ras family. Interacts with EXOC2/Sec5 and EXOC8/Exo84. Interacts (via effector domain) with RALBP1. In terms of processing, prenylation is essential for membrane localization. The farnesylated form confers resistance to the proapoptotic and anti-anchorage-dependent growth effects of some geranylgeranyltransferase I inhibitors.

The protein localises to the cell membrane. It is found in the midbody. It carries out the reaction GTP + H2O = GDP + phosphate + H(+). With respect to regulation, alternates between an inactive form bound to GDP and an active form bound to GTP. Activated by a guanine nucleotide-exchange factor (GEF) and inactivated by a GTPase-activating protein (GAP). Its function is as follows. Multifunctional GTPase involved in a variety of cellular processes including gene expression, cell migration, cell proliferation, oncogenic transformation and membrane trafficking. Accomplishes its multiple functions by interacting with distinct downstream effectors. Acts as a GTP sensor for GTP-dependent exocytosis of dense core vesicles. Required both to stabilize the assembly of the exocyst complex and to localize functional exocyst complexes to the leading edge of migrating cells. Required for suppression of apoptosis. In late stages of cytokinesis, upon completion of the bridge formation between dividing cells, mediates exocyst recruitment to the midbody to drive abscission. Involved in ligand-dependent receptor mediated endocytosis of the EGF and insulin receptors. The protein is Ras-related protein Ral-B (RALB) of Pongo abelii (Sumatran orangutan).